A 152-amino-acid chain; its full sequence is Ubiquitin-conjugating enzyme E2 1 (152 aa).

Residues 4–150 (PARKRLMRDF…VRDVVEQSWT (147 aa)) form the UBC core domain. Residue Cys-88 is the Glycyl thioester intermediate of the active site. The segment at 119 to 152 (NSPANSEAARMYSESKREYNRRVRDVVEQSWTAD) is disordered. Over residues 131–145 (SESKREYNRRVRDVV) the composition is skewed to basic and acidic residues.

It belongs to the ubiquitin-conjugating enzyme family. In terms of tissue distribution, ubiquitously expressed.

The catalysed reaction is S-ubiquitinyl-[E1 ubiquitin-activating enzyme]-L-cysteine + [E2 ubiquitin-conjugating enzyme]-L-cysteine = [E1 ubiquitin-activating enzyme]-L-cysteine + S-ubiquitinyl-[E2 ubiquitin-conjugating enzyme]-L-cysteine.. It participates in protein modification; protein ubiquitination. Accepts the ubiquitin from the E1 complex and catalyzes its covalent attachment to other proteins. The sequence is that of Ubiquitin-conjugating enzyme E2 1 (UBC1) from Arabidopsis thaliana (Mouse-ear cress).